We begin with the raw amino-acid sequence, 690 residues long: Elongation factor G (690 aa).

The tr-type G domain maps to 8–283 (EDYRNFGIMA…AVVDFLPSPL (276 aa)). GTP is bound by residues 17–24 (AHIDAGKT), 81–85 (DTPGH), and 135–138 (NKMD).

It belongs to the TRAFAC class translation factor GTPase superfamily. Classic translation factor GTPase family. EF-G/EF-2 subfamily.

The protein localises to the cytoplasm. Functionally, catalyzes the GTP-dependent ribosomal translocation step during translation elongation. During this step, the ribosome changes from the pre-translocational (PRE) to the post-translocational (POST) state as the newly formed A-site-bound peptidyl-tRNA and P-site-bound deacylated tRNA move to the P and E sites, respectively. Catalyzes the coordinated movement of the two tRNA molecules, the mRNA and conformational changes in the ribosome. The sequence is that of Elongation factor G from Nitrobacter hamburgensis (strain DSM 10229 / NCIMB 13809 / X14).